A 415-amino-acid chain; its full sequence is Mitochondrial tRNA-specific 2-thiouridylase 1 (415 aa).

Residues 37 to 44 (AMSGGVDS) and M63 contribute to the ATP site. An interaction with target base in tRNA region spans residues 124 to 126 (NPD). The Nucleophile role is filled by C129. C129 and C234 are oxidised to a cystine. G159 is a binding site for ATP. Residues 183-185 (KDQ) form an interaction with tRNA region. C234 serves as the catalytic Cysteine persulfide intermediate. An interaction with tRNA region spans residues 356-357 (RH).

The protein belongs to the MnmA/TRMU family.

It is found in the mitochondrion. It carries out the reaction 5-taurinomethyluridine(34) in tRNA + S-sulfanyl-L-cysteinyl-[protein] + AH2 + ATP = 5-taurinomethyl-2-thiouridine(34) in tRNA + L-cysteinyl-[protein] + A + AMP + diphosphate + H(+). Functionally, catalyzes the 2-thiolation of uridine at the wobble position (U34) of mitochondrial tRNA(Lys), tRNA(Glu) and tRNA(Gln). Required for the formation of 5-taurinomethyl-2-thiouridine (tm5s2U) of mitochondrial tRNA(Lys), tRNA(Glu), and tRNA(Gln) at the wobble position. ATP is required to activate the C2 atom of the wobble base. The chain is Mitochondrial tRNA-specific 2-thiouridylase 1 from Schizosaccharomyces pombe (strain 972 / ATCC 24843) (Fission yeast).